The following is a 184-amino-acid chain: TRAF-interacting protein with FHA domain-containing protein A (184 aa).

Thr-9 carries the post-translational modification Phosphothreonine; by ALPK1. The FHA domain occupies 47–103 (VKFGRNSNICHYTFQDKQVSRVQFSLQLFKKFNSSVLSFEIKNMSKKTNLIVDSREL). Residues 165-184 (TYSLCSSQSSSPTEMDENES) form a disordered region. Positions 167 to 177 (SLCSSQSSSPT) are enriched in polar residues.

Belongs to the TIFA family. In terms of assembly, homooligomer; homooligomerizes following phosphorylation at Thr-9. Interacts with IRAK1, TRAF2 and TRAF6. Interacts with TIFAB; binding to TIFAB inhibits TRAF6 activation, possibly by inducing a conformational change in TIFA. Interacts with ZCCHC11; binding to ZCCHC11 suppresses the TRAF6-dependent activation of NF-kappa-B. Phosphorylated at Thr-9 following detection of ADP-D-glycero-beta-D-manno-heptose (ADP-Heptose) by ALPK1. Phosphorylation at Thr-9 by ALPK1 leads to the formation of an intermolecular binding between the FHA domain and phosphorylated Thr-9, promoting TIFA oligomerization and TIFA-mediated NF-kappa-B activation.

The protein resides in the cytoplasm. In terms of biological role, adapter molecule that plays a key role in the activation of pro-inflammatory NF-kappa-B signaling following detection of bacterial pathogen-associated molecular pattern metabolites (PAMPs). Promotes activation of an innate immune response by inducing the oligomerization and polyubiquitination of TRAF6, which leads to the activation of TAK1 and IKK through a proteasome-independent mechanism. TIFA-dependent innate immune response is triggered by ADP-D-glycero-beta-D-manno-heptose (ADP-Heptose), a potent PAMP present in all Gram-negative and some Gram-positive bacteria: ADP-Heptose is recognized by ALPK1, which phosphorylates TIFA at Thr-9, leading to TIFA homooligomerization and subsequent activation of pro-inflammatory NF-kappa-B signaling. This chain is TRAF-interacting protein with FHA domain-containing protein A, found in Homo sapiens (Human).